Here is a 209-residue protein sequence, read N- to C-terminus: ATP synthase subunit O, mitochondrial (209 aa).

The protein belongs to the ATPase delta chain family. As to quaternary structure, F-type ATPases have 2 components, CF(1) - the catalytic core - and CF(0) - the membrane proton channel. CF(1) has five subunits: alpha(3), beta(3), gamma(1), delta(1), epsilon(1). CF(0) has three main subunits: a, b and c.

It is found in the mitochondrion. The protein resides in the mitochondrion inner membrane. Mitochondrial membrane ATP synthase (F(1)F(0) ATP synthase or Complex V) produces ATP from ADP in the presence of a proton gradient across the membrane which is generated by electron transport complexes of the respiratory chain. F-type ATPases consist of two structural domains, F(1) - containing the extramembraneous catalytic core and F(0) - containing the membrane proton channel, linked together by a central stalk and a peripheral stalk. During catalysis, ATP synthesis in the catalytic domain of F(1) is coupled via a rotary mechanism of the central stalk subunits to proton translocation. Part of the complex F(0) domain and the peripheric stalk, which acts as a stator to hold the catalytic alpha(3)beta(3) subcomplex and subunit a/ATP6 static relative to the rotary elements. The protein is ATP synthase subunit O, mitochondrial of Drosophila melanogaster (Fruit fly).